The following is a 501-amino-acid chain: Probable malate:quinone oxidoreductase (501 aa).

It belongs to the MQO family. It depends on FAD as a cofactor.

It catalyses the reaction (S)-malate + a quinone = a quinol + oxaloacetate. The protein operates within carbohydrate metabolism; tricarboxylic acid cycle; oxaloacetate from (S)-malate (quinone route): step 1/1. The sequence is that of Probable malate:quinone oxidoreductase from Geobacillus kaustophilus (strain HTA426).